The chain runs to 286 residues: NADPH-dependent 7-cyano-7-deazaguanine reductase (286 aa).

88 to 90 (VES) serves as a coordination point for substrate. 90–91 (SK) is a binding site for NADPH. C194 (thioimide intermediate) is an active-site residue. D201 serves as the catalytic Proton donor. Position 233–234 (233–234 (HE)) interacts with substrate. 262–263 (RG) serves as a coordination point for NADPH.

The protein belongs to the GTP cyclohydrolase I family. QueF type 2 subfamily. Homodimer.

It is found in the cytoplasm. The catalysed reaction is 7-aminomethyl-7-carbaguanine + 2 NADP(+) = 7-cyano-7-deazaguanine + 2 NADPH + 3 H(+). It participates in tRNA modification; tRNA-queuosine biosynthesis. Functionally, catalyzes the NADPH-dependent reduction of 7-cyano-7-deazaguanine (preQ0) to 7-aminomethyl-7-deazaguanine (preQ1). In Colwellia psychrerythraea (strain 34H / ATCC BAA-681) (Vibrio psychroerythus), this protein is NADPH-dependent 7-cyano-7-deazaguanine reductase.